An 85-amino-acid chain; its full sequence is Large ribosomal subunit protein bL27 (85 aa).

The segment at 1–23 (MAHKKAGGSSRNGRDSESKRLGV) is disordered.

It belongs to the bacterial ribosomal protein bL27 family.

The chain is Large ribosomal subunit protein bL27 from Nitrosococcus oceani (strain ATCC 19707 / BCRC 17464 / JCM 30415 / NCIMB 11848 / C-107).